Consider the following 360-residue polypeptide: UDP-N-acetylglucosamine--N-acetylmuramyl-(pentapeptide) pyrophosphoryl-undecaprenol N-acetylglucosamine transferase (360 aa).

Residues Ser-198 and Gln-289 each contribute to the UDP-N-acetyl-alpha-D-glucosamine site.

Belongs to the glycosyltransferase 28 family. MurG subfamily.

Its subcellular location is the cell membrane. The catalysed reaction is Mur2Ac(oyl-L-Ala-gamma-D-Glu-L-Lys-D-Ala-D-Ala)-di-trans,octa-cis-undecaprenyl diphosphate + UDP-N-acetyl-alpha-D-glucosamine = beta-D-GlcNAc-(1-&gt;4)-Mur2Ac(oyl-L-Ala-gamma-D-Glu-L-Lys-D-Ala-D-Ala)-di-trans,octa-cis-undecaprenyl diphosphate + UDP + H(+). The protein operates within cell wall biogenesis; peptidoglycan biosynthesis. Functionally, cell wall formation. Catalyzes the transfer of a GlcNAc subunit on undecaprenyl-pyrophosphoryl-MurNAc-pentapeptide (lipid intermediate I) to form undecaprenyl-pyrophosphoryl-MurNAc-(pentapeptide)GlcNAc (lipid intermediate II). The sequence is that of UDP-N-acetylglucosamine--N-acetylmuramyl-(pentapeptide) pyrophosphoryl-undecaprenol N-acetylglucosamine transferase from Streptococcus pyogenes serotype M3 (strain SSI-1).